The following is a 382-amino-acid chain: Pentraxin-related protein PTX3 (382 aa).

The first 17 residues, 1–17 (MHISVILFCALWSAVSA), serve as a signal peptide directing secretion. Residues 79–137 (VMLRGELQKLQAELGRLEGSLQKLCGPEAPSETRLARALDDLLQASRDAGRRLARLEDA) are a coiled coil. 2 disulfide bridges follow: Cys180/Cys358 and Cys211/Cys272. The region spanning 180 to 382 (CETAILFPMR…QPHGGAQYVY (203 aa)) is the Pentraxin (PTX) domain. Asn221 carries N-linked (GlcNAc...) asparagine glycosylation.

In terms of assembly, homooctamer; disulfide-linked. Binds to C1q.

It is found in the secreted. Plays a role in the regulation of innate resistance to pathogens, inflammatory reactions, possibly clearance of self-components and female fertility. This is Pentraxin-related protein PTX3 (PTX3) from Bos taurus (Bovine).